The sequence spans 324 residues: MVFSKISQVAHYTPKQVISNDDLSQIMDTSHEWISSRTGIEKRHISTVEMTSDLAIRVAEQLLAGSGYDATALDFIIVATISPDASMPSTAAKVQAAIGATNAFAFDMTAACSGFVFALAMADKLIASGAYQRGLVIGAETLSKIIDWQDRSTAVLFGDGAGGVLLEASEQQHFLAEALHTDGARGQSLTSGQSSLRSPFSQGQEVNSFLQMDGRAIFDFAIRDVSRSITAIIEQSGLAKEELDYLLLHQANRRILDKMAKKIGMPREKFLENMMHYGNTSAASIPILLSESVQNGQLKLDGSQHILLSGFGGGLTWGSLIVKI.

Catalysis depends on residues cysteine 112 and histidine 249. The segment at 250–254 (QANRR) is ACP-binding. Asparagine 279 is a catalytic residue.

It belongs to the thiolase-like superfamily. FabH family. As to quaternary structure, homodimer.

Its subcellular location is the cytoplasm. The enzyme catalyses malonyl-[ACP] + acetyl-CoA + H(+) = 3-oxobutanoyl-[ACP] + CO2 + CoA. Its pathway is lipid metabolism; fatty acid biosynthesis. Its function is as follows. Catalyzes the condensation reaction of fatty acid synthesis by the addition to an acyl acceptor of two carbons from malonyl-ACP. Catalyzes the first condensation reaction which initiates fatty acid synthesis and may therefore play a role in governing the total rate of fatty acid production. Possesses both acetoacetyl-ACP synthase and acetyl transacylase activities. Its substrate specificity determines the biosynthesis of branched-chain and/or straight-chain of fatty acids. The sequence is that of Beta-ketoacyl-[acyl-carrier-protein] synthase III from Streptococcus equi subsp. zooepidemicus (strain H70).